Here is a 146-residue protein sequence, read N- to C-terminus: Leghemoglobin 2 (146 aa).

Positions 2-146 (GFTAQQDALV…LAAAIKKAMS (145 aa)) constitute a Globin domain. Nitrated tyrosine is present on Y30. S45 provides a ligand contact to heme b. A Phosphoserine modification is found at S45. O2 is bound at residue H61. Heme b contacts are provided by K64, H93, and K96. The residue at position 134 (Y134) is a Nitrated tyrosine.

It belongs to the plant globin family. In terms of assembly, monomer. Nitrated in effective nodules and particularly in hypoxic conditions; this mechanism may play a protective role in the symbiosis by buffering toxic peroxynitrite NO(2)(-). Nitration level decrease during nodule senescence. Post-translationally, phosphorylation at Ser-45 disrupts the molecular environment of its porphyrin ring oxygen binding pocket, thus leading to a reduced oxygen consumption and to the delivery of oxygen O(2) to symbiosomes. As to expression, specifically and strongly expressed in root nodules and at low levels in seedlings.

It localises to the cytoplasm. The protein localises to the cytosol. Its subcellular location is the nucleus. In terms of biological role, leghemoglobin that reversibly binds oxygen O(2) through a pentacoordinated heme iron. In root nodules, facilitates the diffusion of oxygen to the bacteroids while preventing the bacterial nitrogenase from being inactivated by buffering dioxygen, nitric oxide and carbon monoxide, and promoting the formation of reactive oxygen species (ROS, e.g. H(2)O(2)). This role is essential for symbiotic nitrogen fixation (SNF). The polypeptide is Leghemoglobin 2 (Lotus japonicus (Lotus corniculatus var. japonicus)).